The primary structure comprises 362 residues: Cobalt-precorrin-5B C(1)-methyltransferase (362 aa).

Belongs to the CbiD family.

It catalyses the reaction Co-precorrin-5B + S-adenosyl-L-methionine = Co-precorrin-6A + S-adenosyl-L-homocysteine. It participates in cofactor biosynthesis; adenosylcobalamin biosynthesis; cob(II)yrinate a,c-diamide from sirohydrochlorin (anaerobic route): step 6/10. In terms of biological role, catalyzes the methylation of C-1 in cobalt-precorrin-5B to form cobalt-precorrin-6A. This is Cobalt-precorrin-5B C(1)-methyltransferase from Synechococcus sp. (strain CC9902).